The sequence spans 115 residues: Large ribosomal subunit protein bL19 (115 aa).

This sequence belongs to the bacterial ribosomal protein bL19 family.

Functionally, this protein is located at the 30S-50S ribosomal subunit interface and may play a role in the structure and function of the aminoacyl-tRNA binding site. This is Large ribosomal subunit protein bL19 from Francisella tularensis subsp. mediasiatica (strain FSC147).